Here is a 1396-residue protein sequence, read N- to C-terminus: ATP-binding cassette transporter pdr1 (1396 aa).

The interval 1–22 (MSEQEKGKGDLDDPNSKNTKCP) is disordered. Residues 73–320 (LHPINIIFRT…FLDLGFIPAK (248 aa)) form the ABC transporter 1 domain. Residues 412–622 (LQVFATAKVT…GYESIMLNEF (211 aa)) form the ABC transmembrane type-2 1 domain. The next 6 membrane-spanning stretches (helical) occupy residues 431 to 451 (YIAT…SLFY), 466 to 486 (VLSN…DIIF), 512 to 532 (LVEF…VYFL), 543 to 563 (FIFY…FRFI), 572 to 592 (IAAL…GAVM), and 680 to 700 (GIIL…ANFI). Positions 758–1001 (LCWRDLNFTV…LVNYFKRIHG (244 aa)) constitute an ABC transporter 2 domain. Position 794–801 (794–801 (GENKSGKS)) interacts with ATP. Positions 1071 to 1286 (FQIYKISMRN…FLEGMIGGVL (216 aa)) constitute an ABC transmembrane type-2 2 domain. The next 5 membrane-spanning stretches (helical) occupy residues 1095–1115 (VAFN…QGVG), 1166–1186 (FIIA…TLFF), 1208–1228 (FAWL…IGIA), 1245–1265 (FVFI…VGFW), and 1361–1381 (CIMI…YYII).

It belongs to the ABC transporter superfamily. ABCG family. PDR (TC 3.A.1.205) subfamily.

It localises to the endoplasmic reticulum membrane. This is ATP-binding cassette transporter pdr1 (pdr1) from Schizosaccharomyces pombe (strain 972 / ATCC 24843) (Fission yeast).